The primary structure comprises 252 residues: 3-deoxy-manno-octulosonate cytidylyltransferase (252 aa).

Belongs to the KdsB family.

The protein resides in the cytoplasm. The catalysed reaction is 3-deoxy-alpha-D-manno-oct-2-ulosonate + CTP = CMP-3-deoxy-beta-D-manno-octulosonate + diphosphate. Its pathway is nucleotide-sugar biosynthesis; CMP-3-deoxy-D-manno-octulosonate biosynthesis; CMP-3-deoxy-D-manno-octulosonate from 3-deoxy-D-manno-octulosonate and CTP: step 1/1. It functions in the pathway bacterial outer membrane biogenesis; lipopolysaccharide biosynthesis. In terms of biological role, activates KDO (a required 8-carbon sugar) for incorporation into bacterial lipopolysaccharide in Gram-negative bacteria. The sequence is that of 3-deoxy-manno-octulosonate cytidylyltransferase from Xylella fastidiosa (strain Temecula1 / ATCC 700964).